Consider the following 168-residue polypeptide: ATP synthase subunit b, sodium ion specific (168 aa).

Residues 9 to 29 (VSIDINMFWQIINFLILMFFF) form a helical membrane-spanning segment.

This sequence belongs to the ATPase B chain family. As to quaternary structure, F-type ATPases have 2 components, F(1) - the catalytic core - and F(0) - the membrane proton channel. F(1) has five subunits: alpha(3), beta(3), gamma(1), delta(1), epsilon(1). F(0) has three main subunits: a(1), b(2) and c(10-14). The alpha and beta chains form an alternating ring which encloses part of the gamma chain. F(1) is attached to F(0) by a central stalk formed by the gamma and epsilon chains, while a peripheral stalk is formed by the delta and b chains.

Its subcellular location is the cell inner membrane. Its function is as follows. F(1)F(0) ATP synthase produces ATP from ADP in the presence of a proton or sodium gradient. F-type ATPases consist of two structural domains, F(1) containing the extramembraneous catalytic core and F(0) containing the membrane proton channel, linked together by a central stalk and a peripheral stalk. During catalysis, ATP synthesis in the catalytic domain of F(1) is coupled via a rotary mechanism of the central stalk subunits to proton translocation. In terms of biological role, component of the F(0) channel, it forms part of the peripheral stalk, linking F(1) to F(0). This chain is ATP synthase subunit b, sodium ion specific (atpF), found in Propionigenium modestum.